Reading from the N-terminus, the 396-residue chain is Acetate kinase (396 aa).

Residue Asn8 coordinates Mg(2+). Lys15 is an ATP binding site. Arg89 is a binding site for substrate. The active-site Proton donor/acceptor is Asp146. ATP is bound by residues His206–Gly210, Asp283–Arg285, and Gly331–Asn335. Glu383 contacts Mg(2+).

This sequence belongs to the acetokinase family. Homodimer. Requires Mg(2+) as cofactor. The cofactor is Mn(2+).

It is found in the cytoplasm. It catalyses the reaction acetate + ATP = acetyl phosphate + ADP. It functions in the pathway metabolic intermediate biosynthesis; acetyl-CoA biosynthesis; acetyl-CoA from acetate: step 1/2. Its function is as follows. Catalyzes the formation of acetyl phosphate from acetate and ATP. Can also catalyze the reverse reaction. The protein is Acetate kinase of Streptococcus pneumoniae (strain Hungary19A-6).